The chain runs to 576 residues: Peptidoglycan D,D-transpeptidase FtsI (576 aa).

A helical transmembrane segment spans residues 22 to 42 (ITILLSLIIITIILVLSRITF). Serine 308 acts as the Acyl-ester intermediate in catalysis.

It belongs to the transpeptidase family. FtsI subfamily.

The protein localises to the cell inner membrane. The enzyme catalyses Preferential cleavage: (Ac)2-L-Lys-D-Ala-|-D-Ala. Also transpeptidation of peptidyl-alanyl moieties that are N-acyl substituents of D-alanine.. It functions in the pathway cell wall biogenesis; peptidoglycan biosynthesis. Functionally, catalyzes cross-linking of the peptidoglycan cell wall at the division septum. The polypeptide is Peptidoglycan D,D-transpeptidase FtsI (Buchnera aphidicola subsp. Baizongia pistaciae (strain Bp)).